Consider the following 255-residue polypeptide: tRNA (guanine-N(7)-)-methyltransferase (255 aa).

Residues 1–37 (MTAAASDPHNPRSSADDTASPRCESGQGSFFGRRKGH) are disordered. S-adenosyl-L-methionine-binding residues include E80, E105, D132, and D154. D154 is an active-site residue. Positions 158 and 190 each coordinate substrate.

The protein belongs to the class I-like SAM-binding methyltransferase superfamily. TrmB family.

The enzyme catalyses guanosine(46) in tRNA + S-adenosyl-L-methionine = N(7)-methylguanosine(46) in tRNA + S-adenosyl-L-homocysteine. Its pathway is tRNA modification; N(7)-methylguanine-tRNA biosynthesis. Its function is as follows. Catalyzes the formation of N(7)-methylguanine at position 46 (m7G46) in tRNA. This Nitrobacter hamburgensis (strain DSM 10229 / NCIMB 13809 / X14) protein is tRNA (guanine-N(7)-)-methyltransferase.